Reading from the N-terminus, the 258-residue chain is Large ribosomal subunit protein uL2x (258 aa).

A disordered region spans residues 211–231; that stretch reads HGGGNHQHIGHASTVRRDAPP.

It belongs to the universal ribosomal protein uL2 family.

The protein is Large ribosomal subunit protein uL2x (RPL8C) of Arabidopsis thaliana (Mouse-ear cress).